Here is a 452-residue protein sequence, read N- to C-terminus: Lamina-associated polypeptide 2, isoforms beta/delta/epsilon/gamma (452 aa).

The segment at 1 to 409 is nucleoplasmic; sequence MPEFLEDPSV…KSEKTKKRRS (409 aa). An LEM-like domain is found at 5 to 48; that stretch reads LEDPSVLTKDKLKSELVANNVTLPAGEQRKDVYVQLYLQHLTAR. 2 disordered regions span residues 48-111 and 149-263; these read RNRP…DLDV and REQG…RVET. The interval 49-108 is linker; that stretch reads NRPPLAAGANSKGPPDFSSDEEREPTPVLGSGASVGRGRGAVGRKATKKTDKPRLEDKDD. Residues S59, S66, and S67 each carry the phosphoserine modification. A Phosphothreonine modification is found at T74. Residues S79 and S82 each carry the phosphoserine modification. 2 positions are modified to omega-N-methylarginine: R85 and R87. Over residues 96-105 the composition is skewed to basic and acidic residues; that stretch reads KKTDKPRLED. In terms of domain architecture, LEM spans 109-153; it reads LDVTELSNEELLDQLVRYGVNPGPIVGTTRKLYEKKLLKLREQGT. Residues 137–242 form an NAKAP95-binding N region; the sequence is TRKLYEKKLL…TSGSSTGGPL (106 aa). Position 153 is a phosphothreonine (T153). The segment covering 154 to 177 has biased composition (polar residues); sequence ESRSSTPLPTVSSSAENTRQNGSN. A phosphoserine mark is found at S155 and S158. 2 positions are modified to phosphothreonine: T159 and T163. Phosphoserine occurs at positions 165, 167, and 176. Positions 178–202 are enriched in basic and acidic residues; the sequence is DSDRYSDNDEDSKIELKLEKREPLK. S179 bears the Phosphoserine; by PKC mark. Phosphoserine is present on residues S183 and S189. K206 is modified (N6-acetyllysine). Phosphothreonine is present on T210. Residues S221 and S223 each carry the phosphoserine modification. A compositionally biased stretch (low complexity) spans 226 to 240; sequence GVTETEWTSGSSTGG. Residues S249, S253, S264, S291, S305, and S306 each carry the phosphoserine modification. The segment at 298-370 is binds lamins B; that stretch reads TGNFKHASSI…SCRRPIKGAA (73 aa). The segment at 299-373 is NAKAP95-binding C; that stretch reads GNFKHASSIL…RPIKGAAGRP (75 aa). A Phosphothreonine modification is found at T311. S314 is subject to Phosphoserine. The residue at position 319 (R319) is a Citrulline. Phosphoserine occurs at positions 361, 377, and 384. Residue K388 is modified to N6-acetyllysine. Residue K400 forms a Glycyl lysine isopeptide (Lys-Gly) (interchain with G-Cter in SUMO2) linkage. Position 401 is a phosphoserine (S401). Residues 410 to 430 form a helical; Signal-anchor for type II membrane protein membrane-spanning segment; it reads VPMWIKMLLFALVAVFLFLVY. Over 431 to 452 the chain is Lumenal; it reads QAMETNQGNPFTNFLQDTKISN.

Belongs to the LEM family. Interacts with LMNB1, LMNB2, BANF1, AKAP8L, GMCL and chromosomes. In terms of processing, mitosis-specific phosphorylation specifically abolishes its binding to lamin B and chromosomes. Citrullinated by PADI4.

Its subcellular location is the nucleus inner membrane. It is found in the chromosome. Its function is as follows. May help direct the assembly of the nuclear lamina and thereby help maintain the structural organization of the nuclear envelope. Possible receptor for attachment of lamin filaments to the inner nuclear membrane. May be involved in the control of initiation of DNA replication through its interaction with NAKAP95. The polypeptide is Lamina-associated polypeptide 2, isoforms beta/delta/epsilon/gamma (Tmpo) (Mus musculus (Mouse)).